The following is a 352-amino-acid chain: Iron-sulfur cluster carrier protein (352 aa).

114 to 121 (GKGGVGKS) is a binding site for ATP.

This sequence belongs to the Mrp/NBP35 ATP-binding proteins family. Homodimer. Interacts with BrxC.

In terms of biological role, binds and transfers iron-sulfur (Fe-S) clusters to target apoproteins. Can hydrolyze ATP. Functionally, negatively regulates the expression of hpr/scoC. The effect on hpr/scoC may be indirect. The sequence is that of Iron-sulfur cluster carrier protein (salA) from Bacillus subtilis (strain 168).